Here is a 468-residue protein sequence, read N- to C-terminus: 3-isopropylmalate dehydratase large subunit (468 aa).

Cysteine 349, cysteine 409, and cysteine 412 together coordinate [4Fe-4S] cluster.

The protein belongs to the aconitase/IPM isomerase family. LeuC type 1 subfamily. As to quaternary structure, heterodimer of LeuC and LeuD. It depends on [4Fe-4S] cluster as a cofactor.

It catalyses the reaction (2R,3S)-3-isopropylmalate = (2S)-2-isopropylmalate. It functions in the pathway amino-acid biosynthesis; L-leucine biosynthesis; L-leucine from 3-methyl-2-oxobutanoate: step 2/4. Catalyzes the isomerization between 2-isopropylmalate and 3-isopropylmalate, via the formation of 2-isopropylmaleate. This Shewanella baltica (strain OS155 / ATCC BAA-1091) protein is 3-isopropylmalate dehydratase large subunit.